The sequence spans 156 residues: SCP2 sterol-binding domain-containing protein 1 (156 aa).

The SCP2 domain maps to 44 to 156 (TVPVFEDISQ…ERVFKDWAKW (113 aa)).

The sequence is that of SCP2 sterol-binding domain-containing protein 1 (SCP2D1) from Bos taurus (Bovine).